The chain runs to 396 residues: Argininosuccinate synthase (396 aa).

Residue 9-17 (AFSGGLDTT) coordinates ATP. Y86 provides a ligand contact to L-citrulline. Residue G116 participates in ATP binding. L-aspartate is bound by residues T118, N122, and D123. An L-citrulline-binding site is contributed by N122. The L-citrulline site is built by R126, S172, S181, E254, and Y266.

The protein belongs to the argininosuccinate synthase family. Type 1 subfamily. As to quaternary structure, homotetramer.

The protein localises to the cytoplasm. The enzyme catalyses L-citrulline + L-aspartate + ATP = 2-(N(omega)-L-arginino)succinate + AMP + diphosphate + H(+). The protein operates within amino-acid biosynthesis; L-arginine biosynthesis; L-arginine from L-ornithine and carbamoyl phosphate: step 2/3. The sequence is that of Argininosuccinate synthase from Halobacterium salinarum (strain ATCC 700922 / JCM 11081 / NRC-1) (Halobacterium halobium).